We begin with the raw amino-acid sequence, 144 residues long: Deoxyuridine 5'-triphosphate nucleotidohydrolase (144 aa).

Substrate is bound by residues 63 to 65, Asn76, and 80 to 82; these read RSG and TID.

The protein belongs to the dUTPase family. The cofactor is Mg(2+).

It carries out the reaction dUTP + H2O = dUMP + diphosphate + H(+). The protein operates within pyrimidine metabolism; dUMP biosynthesis; dUMP from dCTP (dUTP route): step 2/2. In terms of biological role, this enzyme is involved in nucleotide metabolism: it produces dUMP, the immediate precursor of thymidine nucleotides and it decreases the intracellular concentration of dUTP so that uracil cannot be incorporated into DNA. This chain is Deoxyuridine 5'-triphosphate nucleotidohydrolase, found in Alkaliphilus metalliredigens (strain QYMF).